We begin with the raw amino-acid sequence, 360 residues long: S-adenosylmethionine decarboxylase proenzyme (360 aa).

Residues E13 and E16 contribute to the active site. S73 (schiff-base intermediate with substrate; via pyruvic acid) is an active-site residue. Residue S73 is modified to Pyruvic acid (Ser); by autocatalysis. C87 (proton donor; for catalytic activity) is an active-site residue. Catalysis depends on proton acceptor; for processing activity residues S236 and H249.

This sequence belongs to the eukaryotic AdoMetDC family. Requires pyruvate as cofactor. Post-translationally, is synthesized initially as an inactive proenzyme. Formation of the active enzyme involves a self-maturation process in which the active site pyruvoyl group is generated from an internal serine residue via an autocatalytic post-translational modification. Two non-identical subunits are generated from the proenzyme in this reaction, and the pyruvate is formed at the N-terminus of the alpha chain, which is derived from the carboxyl end of the proenzyme. The post-translation cleavage follows an unusual pathway, termed non-hydrolytic serinolysis, in which the side chain hydroxyl group of the serine supplies its oxygen atom to form the C-terminus of the beta chain, while the remainder of the serine residue undergoes an oxidative deamination to produce ammonia and the pyruvoyl group blocking the N-terminus of the alpha chain. Stolon, also expressed in leaves, stems and roots.

The enzyme catalyses S-adenosyl-L-methionine + H(+) = S-adenosyl 3-(methylsulfanyl)propylamine + CO2. The protein operates within amine and polyamine biosynthesis; S-adenosylmethioninamine biosynthesis; S-adenosylmethioninamine from S-adenosyl-L-methionine: step 1/1. The chain is S-adenosylmethionine decarboxylase proenzyme (SAMDC) from Solanum tuberosum (Potato).